We begin with the raw amino-acid sequence, 211 residues long: Thymidylate kinase (211 aa).

Position 7-14 (7-14) interacts with ATP; it reads GIDASGKS.

It belongs to the thymidylate kinase family.

The enzyme catalyses dTMP + ATP = dTDP + ADP. Functionally, phosphorylation of dTMP to form dTDP in both de novo and salvage pathways of dTTP synthesis. This Mesomycoplasma hyopneumoniae (strain 7448) (Mycoplasma hyopneumoniae) protein is Thymidylate kinase.